A 263-amino-acid polypeptide reads, in one-letter code: MGQTALAGGSSSTPTPQALYPDLSCPEGLEELLSAPPPDLGAQRRHGWNPKDCSENIEVKEGGLYFERRPVAQSTDGARGKRGYSRGLHAWEISWPLEQRGTHAVVGVATALAPLQTDHYAALLGSNSESWGWDIGRGKLYHQSKGPGAPQYPAGTQGEQLEVPERLLVVLDMEEGTLGYAIGGTYLGPAFRGLKGRTLYPAVSAVWGQCQVRIRYLGERRAEPHSLLHLSRLCVRHNLGDTRLGQVSALPLPPAMKRYLLYQ.

Positions 1 to 16 are enriched in polar residues; that stretch reads MGQTALAGGSSSTPTP. Residues 1-48 are disordered; the sequence is MGQTALAGGSSSTPTPQALYPDLSCPEGLEELLSAPPPDLGAQRRHGW. A B30.2/SPRY domain is found at 26-221; the sequence is PEGLEELLSA…VRIRYLGERR (196 aa). Positions 222–263 constitute an SOCS box domain; that stretch reads AEPHSLLHLSRLCVRHNLGDTRLGQVSALPLPPAMKRYLLYQ.

Belongs to the SPSB family. Component of the probable ECS(SPSB2) E3 ubiquitin-protein ligase complex which contains CUL5, RNF7/RBX2, Elongin BC complex and SPSB2. Interacts with CUL5, RNF7, ELOB and ELOC. Interacts with MET. Interacts (via B30.2/SPRY domain) with PAWR; this interaction occurs in association with the Elongin BC complex. Interacts with NOS2. In terms of assembly, (Microbial infection) Interacts (via C-terminus) with HCV envelope glycoprotein E1. Interacts (via C-terminus) with HCV non-structural protein 5A; this interaction targets NS5A for ubiquitination and degradation.

It is found in the cytoplasm. The protein localises to the cytosol. It participates in protein modification; protein ubiquitination. Its function is as follows. Substrate recognition component of a SCF-like ECS (Elongin BC-CUL2/5-SOCS-box protein) E3 ubiquitin-protein ligase complex which mediates the ubiquitination and subsequent proteasomal degradation of target proteins. Negatively regulates nitric oxide (NO) production and limits cellular toxicity in activated macrophages by mediating the ubiquitination and proteasomal degradation of NOS2. Acts as a bridge which links NOS2 with the ECS E3 ubiquitin ligase complex components ELOC and CUL5. This Homo sapiens (Human) protein is SPRY domain-containing SOCS box protein 2 (SPSB2).